Reading from the N-terminus, the 168-residue chain is Mediator of RNA polymerase II transcription subunit 7a (168 aa).

Coiled coils occupy residues 64 to 92 (KDSN…ADVL) and 132 to 166 (IMEL…LTLD).

This sequence belongs to the Mediator complex subunit 7 family. In terms of assembly, component of the Mediator complex. Interacts with MEE14/CBP1.

The protein localises to the nucleus. Component of the Mediator complex, a coactivator involved in the regulated transcription of nearly all RNA polymerase II-dependent genes. Mediator functions as a bridge to convey information from gene-specific regulatory proteins to the basal RNA polymerase II transcription machinery. The Mediator complex, having a compact conformation in its free form, is recruited to promoters by direct interactions with regulatory proteins and serves for the assembly of a functional pre-initiation complex with RNA polymerase II and the general transcription factors. The sequence is that of Mediator of RNA polymerase II transcription subunit 7a (MED7A) from Arabidopsis thaliana (Mouse-ear cress).